Here is a 122-residue protein sequence, read N- to C-terminus: Nitrogen fixation nifHD region GlnB-like protein 2 (122 aa).

Belongs to the P(II) protein family.

Could be involved in the regulation of nitrogen fixation. In Methanobacterium ivanovii, this protein is Nitrogen fixation nifHD region GlnB-like protein 2 (glnBB).